A 186-amino-acid chain; its full sequence is ATP synthase subunit delta (186 aa).

Belongs to the ATPase delta chain family. F-type ATPases have 2 components, F(1) - the catalytic core - and F(0) - the membrane proton channel. F(1) has five subunits: alpha(3), beta(3), gamma(1), delta(1), epsilon(1). F(0) has three main subunits: a(1), b(2) and c(10-14). The alpha and beta chains form an alternating ring which encloses part of the gamma chain. F(1) is attached to F(0) by a central stalk formed by the gamma and epsilon chains, while a peripheral stalk is formed by the delta and b chains.

The protein localises to the cell inner membrane. Functionally, f(1)F(0) ATP synthase produces ATP from ADP in the presence of a proton or sodium gradient. F-type ATPases consist of two structural domains, F(1) containing the extramembraneous catalytic core and F(0) containing the membrane proton channel, linked together by a central stalk and a peripheral stalk. During catalysis, ATP synthesis in the catalytic domain of F(1) is coupled via a rotary mechanism of the central stalk subunits to proton translocation. In terms of biological role, this protein is part of the stalk that links CF(0) to CF(1). It either transmits conformational changes from CF(0) to CF(1) or is implicated in proton conduction. The protein is ATP synthase subunit delta of Bradyrhizobium diazoefficiens (strain JCM 10833 / BCRC 13528 / IAM 13628 / NBRC 14792 / USDA 110).